A 204-amino-acid polypeptide reads, in one-letter code: Urease accessory protein UreG (204 aa).

15 to 22 (GPVGSGKT) lines the GTP pocket.

Belongs to the SIMIBI class G3E GTPase family. UreG subfamily. As to quaternary structure, homodimer. UreD, UreF and UreG form a complex that acts as a GTP-hydrolysis-dependent molecular chaperone, activating the urease apoprotein by helping to assemble the nickel containing metallocenter of UreC. The UreE protein probably delivers the nickel.

Its subcellular location is the cytoplasm. In terms of biological role, facilitates the functional incorporation of the urease nickel metallocenter. This process requires GTP hydrolysis, probably effectuated by UreG. The polypeptide is Urease accessory protein UreG (Methylobacterium sp. (strain 4-46)).